The sequence spans 270 residues: MNKNSPELHPIGVFDSGVGGLTVVRALMERLPFENILYFGDTARVPYGVKSVETINAYARQITEFLLRQEVKLLIIACNTMAAVARQSVESLSPVPVLDVIDAGARRAVAETRTHSVGVIGTPTTINSNAYARAICRLAPETRIFSQACALLVPLVEEGWLDHPVTRLTAQEYLRPVLAEHIDTLVLGCTHYPLLKALLQDVAGPDIHLVDSAEAMADATAELLQVQHLTNPERIPPEYRFYVTDVPLRFQQIGERFLGRSLPGVERVQL.

Substrate-binding positions include 15–16 (DS) and 47–48 (YG). Residue Cys-78 is the Proton donor/acceptor of the active site. 79 to 80 (NT) provides a ligand contact to substrate. Cys-189 serves as the catalytic Proton donor/acceptor. Position 190 to 191 (190 to 191 (TH)) interacts with substrate.

This sequence belongs to the aspartate/glutamate racemases family.

It catalyses the reaction L-glutamate = D-glutamate. Its pathway is cell wall biogenesis; peptidoglycan biosynthesis. In terms of biological role, provides the (R)-glutamate required for cell wall biosynthesis. The chain is Glutamate racemase from Syntrophus aciditrophicus (strain SB).